We begin with the raw amino-acid sequence, 106 residues long: Iron-sulfur cluster assembly protein CyaY (106 aa).

The protein belongs to the frataxin family. As to quaternary structure, interacts with IscS. Certain pairs of proteins can bind simultaneously to IscS; IscS-IscU-CyaY complexes can be isolated in vitro, but (IscS-TusA-CyaY) complexes cannot.

Functionally, involved in iron-sulfur (Fe-S) cluster assembly. May act as a regulator of Fe-S biogenesis. The sequence is that of Iron-sulfur cluster assembly protein CyaY from Escherichia coli O157:H7.